A 110-amino-acid polypeptide reads, in one-letter code: UPF0060 membrane protein BPSL1340 (110 aa).

The next 4 helical transmembrane spans lie at 9–29, 34–54, 64–84, and 86–106; these read ALFVLTAVAEIVGCYLPWLVL, PAWLLAPAALSLALFAWLLTL, AAYGGVYIAVALAWLRIVDGV, and LSRWDVAGAALALAGMSVIAL.

This sequence belongs to the UPF0060 family.

Its subcellular location is the cell inner membrane. The sequence is that of UPF0060 membrane protein BPSL1340 from Burkholderia pseudomallei (strain K96243).